A 196-amino-acid chain; its full sequence is Glycerol-3-phosphate acyltransferase (196 aa).

4 consecutive transmembrane segments (helical) span residues 3–23 (NAVFVIAAYLLGSISFGILVS), 78–98 (VGVVCWVAVAVFLGHLYPVFY), 112–132 (VLLAFSPLLAGLALLSWIVVF), and 154–174 (WLLLPQIGYIIVVFVLSLLLI).

Belongs to the PlsY family. Probably interacts with PlsX.

The protein resides in the cell inner membrane. It carries out the reaction an acyl phosphate + sn-glycerol 3-phosphate = a 1-acyl-sn-glycero-3-phosphate + phosphate. It participates in lipid metabolism; phospholipid metabolism. Catalyzes the transfer of an acyl group from acyl-phosphate (acyl-PO(4)) to glycerol-3-phosphate (G3P) to form lysophosphatidic acid (LPA). This enzyme utilizes acyl-phosphate as fatty acyl donor, but not acyl-CoA or acyl-ACP. The protein is Glycerol-3-phosphate acyltransferase of Methylobacillus flagellatus (strain ATCC 51484 / DSM 6875 / VKM B-1610 / KT).